Reading from the N-terminus, the 744-residue chain is 6-phosphofructo-2-kinase/fructose-2,6-bisphosphatase (744 aa).

Disordered stretches follow at residues 1 to 23 and 213 to 245; these read MGSG…GGQL and RSLS…DGSP. G2 carries N-myristoyl glycine lipidation. The CBM20 domain maps to 17 to 122; it reads NGGGGQLYVS…GDARLALFRL (106 aa). The span at 213–232 shows a compositional bias: polar residues; sequence RSLSASGSFRNDSTPKAAQR. Position 220 is a phosphoserine; by CPK3 (S220). Phosphoserine is present on residues S276 and S295. Positions 301–549 are 6-phosphofructo-2-kinase; the sequence is SLSASSFLID…VFFLVNTHLT (249 aa). Position 303 is a phosphoserine; by CPK3 (S303). 349–357 is a binding site for ATP; sequence GLPARGKTF. 2 residues coordinate beta-D-fructose 6-phosphate: R382 and R406. The active site involves D431. T433 and R439 together coordinate beta-D-fructose 6-phosphate. C460 is an active-site residue. 469–474 is an ATP binding site; it reads NIRLKI. Beta-D-fructose 6-phosphate-binding residues include R496 and Y500. The fructose-2,6-bisphosphatase stretch occupies residues 550 to 744; sequence PRPILLTRHG…VQEKRYKLMD (195 aa). Residue R557 coordinates beta-D-fructose 2,6-bisphosphate. The active-site Tele-phosphohistidine intermediate is the H558. Beta-D-fructose 2,6-bisphosphate contacts are provided by N564 and G570. E630 acts as the Proton donor/acceptor in catalysis. The beta-D-fructose 2,6-bisphosphate site is built by Y641, R655, K659, Y670, Q697, and R701. Residue 652-655 coordinates ATP; the sequence is YESR. 697-701 is an ATP binding site; the sequence is QAVLR.

It in the C-terminal section; belongs to the phosphoglycerate mutase family. In terms of assembly, interacts with 14-3-3 proteins; these interactions may regulate both nitrate assimilation and sucrose/starch partitioning in leaves during the diurnal cycle. Post-translationally, phosphorylation at Ser-220 and Ser-303 by CPK3 promotes 14-3-3 proteins binding.

It localises to the membrane. It is found in the cytoplasm. The catalysed reaction is beta-D-fructose 2,6-bisphosphate + H2O = beta-D-fructose 6-phosphate + phosphate. The enzyme catalyses beta-D-fructose 6-phosphate + ATP = beta-D-fructose 2,6-bisphosphate + ADP + H(+). Its activity is regulated as follows. 6-phosphofructo-2-kinase activity is activated by pyruvate. 6-phosphofructo-2-kinase activity is inhibited by PPi, phosphoenolpyruvate and 2-phosphoglycerate. Fructose-2,6-bisphosphatase activity is inhibited by pyruvate, fructose 1,6-bisphosphate and 6-phosphogluconate. Its function is as follows. Synthesis and degradation of fructose 2,6-bisphosphate. Regulates carbon partitioning between sucrose versus starch during the diurnal cycle. The polypeptide is 6-phosphofructo-2-kinase/fructose-2,6-bisphosphatase (FKFBP) (Arabidopsis thaliana (Mouse-ear cress)).